A 108-amino-acid polypeptide reads, in one-letter code: Mitochondrial pyruvate carrier 3 (108 aa).

Transmembrane regions (helical) follow at residues 19 to 35, 51 to 67, and 74 to 90; these read IHFW…IANI, IVIT…STVI, and LFSV…YQLT.

The protein belongs to the mitochondrial pyruvate carrier (MPC) (TC 2.A.105) family. As to expression, abundant in leaf and particularly in the guard cells.

The protein localises to the mitochondrion. The protein resides in the mitochondrion inner membrane. Mediates the uptake of pyruvate into mitochondria. Negatively regulates ABA-induced guard cell signaling and mediates drought stress responses. The chain is Mitochondrial pyruvate carrier 3 from Arabidopsis thaliana (Mouse-ear cress).